The sequence spans 206 residues: Imidazoleglycerol-phosphate dehydratase (206 aa).

The protein belongs to the imidazoleglycerol-phosphate dehydratase family.

The protein resides in the cytoplasm. The enzyme catalyses D-erythro-1-(imidazol-4-yl)glycerol 3-phosphate = 3-(imidazol-4-yl)-2-oxopropyl phosphate + H2O. Its pathway is amino-acid biosynthesis; L-histidine biosynthesis; L-histidine from 5-phospho-alpha-D-ribose 1-diphosphate: step 6/9. The protein is Imidazoleglycerol-phosphate dehydratase of Mycolicibacterium smegmatis (strain ATCC 700084 / mc(2)155) (Mycobacterium smegmatis).